A 79-amino-acid polypeptide reads, in one-letter code: Small ribosomal subunit protein bS18 (79 aa).

The protein belongs to the bacterial ribosomal protein bS18 family. In terms of assembly, part of the 30S ribosomal subunit. Forms a tight heterodimer with protein bS6.

Its function is as follows. Binds as a heterodimer with protein bS6 to the central domain of the 16S rRNA, where it helps stabilize the platform of the 30S subunit. The polypeptide is Small ribosomal subunit protein bS18 (Renibacterium salmoninarum (strain ATCC 33209 / DSM 20767 / JCM 11484 / NBRC 15589 / NCIMB 2235)).